A 105-amino-acid chain; its full sequence is Sec-independent protein translocase protein TatA (105 aa).

The chain crosses the membrane as a helical span at residues 1-21; sequence MSLGPWEIGIIVLLIIVLFGA. Over residues 41–50 the composition is skewed to basic and acidic residues; it reads EVKEMNKDGD. Residues 41–105 are disordered; it reads EVKEMNKDGD…QNYEDPNRTS (65 aa). A compositionally biased stretch (low complexity) spans 52 to 92; it reads PEQQQQPQQQIAPNQIEAPQPNFEQHYQGQQVQQPQNPQTP. Residues 96-105 show a composition bias toward basic and acidic residues; that stretch reads QNYEDPNRTS.

It belongs to the TatA/E family. In terms of assembly, the Tat system comprises two distinct complexes: a TatABC complex, containing multiple copies of TatA, TatB and TatC subunits, and a separate TatA complex, containing only TatA subunits. Substrates initially bind to the TatABC complex, which probably triggers association of the separate TatA complex to form the active translocon.

The protein localises to the cell membrane. Its function is as follows. Part of the twin-arginine translocation (Tat) system that transports large folded proteins containing a characteristic twin-arginine motif in their signal peptide across membranes. TatA could form the protein-conducting channel of the Tat system. The protein is Sec-independent protein translocase protein TatA of Corynebacterium glutamicum (strain ATCC 13032 / DSM 20300 / JCM 1318 / BCRC 11384 / CCUG 27702 / LMG 3730 / NBRC 12168 / NCIMB 10025 / NRRL B-2784 / 534).